The primary structure comprises 1291 residues: DNA-directed RNA polymerase subunit beta' (1291 aa).

4 residues coordinate Zn(2+): cysteine 60, cysteine 62, cysteine 75, and cysteine 78. Aspartate 535, aspartate 537, and aspartate 539 together coordinate Mg(2+). Zn(2+) is bound by residues cysteine 874, cysteine 951, cysteine 958, and cysteine 961.

The protein belongs to the RNA polymerase beta' chain family. As to quaternary structure, the RNAP catalytic core consists of 2 alpha, 1 beta, 1 beta' and 1 omega subunit. When a sigma factor is associated with the core the holoenzyme is formed, which can initiate transcription. Mg(2+) is required as a cofactor. The cofactor is Zn(2+).

It carries out the reaction RNA(n) + a ribonucleoside 5'-triphosphate = RNA(n+1) + diphosphate. In terms of biological role, DNA-dependent RNA polymerase catalyzes the transcription of DNA into RNA using the four ribonucleoside triphosphates as substrates. This Leifsonia xyli subsp. xyli (strain CTCB07) protein is DNA-directed RNA polymerase subunit beta'.